The chain runs to 466 residues: Putative ABC transporter ATP-binding protein MG065 (466 aa).

Positions 233-463 (IELKNVYKYI…NLNPKQVEEI (231 aa)) constitute an ABC transporter domain. 269–276 (GPSGSGKT) serves as a coordination point for ATP.

Belongs to the ABC transporter superfamily.

In Mycoplasma genitalium (strain ATCC 33530 / DSM 19775 / NCTC 10195 / G37) (Mycoplasmoides genitalium), this protein is Putative ABC transporter ATP-binding protein MG065.